A 449-amino-acid chain; its full sequence is Phosphoglucosamine mutase (449 aa).

The active-site Phosphoserine intermediate is Ser-100. 4 residues coordinate Mg(2+): Ser-100, Asp-241, Asp-243, and Asp-245. Position 100 is a phosphoserine (Ser-100).

This sequence belongs to the phosphohexose mutase family. Requires Mg(2+) as cofactor. Activated by phosphorylation.

It carries out the reaction alpha-D-glucosamine 1-phosphate = D-glucosamine 6-phosphate. In terms of biological role, catalyzes the conversion of glucosamine-6-phosphate to glucosamine-1-phosphate. The polypeptide is Phosphoglucosamine mutase (Clostridium botulinum (strain 657 / Type Ba4)).